A 237-amino-acid chain; its full sequence is 1-(5-phosphoribosyl)-5-[(5-phosphoribosylamino)methylideneamino] imidazole-4-carboxamide isomerase (237 aa).

Asp8 acts as the Proton acceptor in catalysis. Residue Asp129 is the Proton donor of the active site.

It belongs to the HisA/HisF family.

Its subcellular location is the cytoplasm. The enzyme catalyses 1-(5-phospho-beta-D-ribosyl)-5-[(5-phospho-beta-D-ribosylamino)methylideneamino]imidazole-4-carboxamide = 5-[(5-phospho-1-deoxy-D-ribulos-1-ylimino)methylamino]-1-(5-phospho-beta-D-ribosyl)imidazole-4-carboxamide. The protein operates within amino-acid biosynthesis; L-histidine biosynthesis; L-histidine from 5-phospho-alpha-D-ribose 1-diphosphate: step 4/9. This chain is 1-(5-phosphoribosyl)-5-[(5-phosphoribosylamino)methylideneamino] imidazole-4-carboxamide isomerase, found in Acetivibrio thermocellus (strain ATCC 27405 / DSM 1237 / JCM 9322 / NBRC 103400 / NCIMB 10682 / NRRL B-4536 / VPI 7372) (Clostridium thermocellum).